The sequence spans 527 residues: Rhesus-like glycoprotein A (527 aa).

Residues 1–18 (MTHNDDDHKWVTTKRKEP) are Cytoplasmic-facing. Residues 19–39 (IFFTVILFIFQIFMIICFAAL) form a helical membrane-spanning segment. The Extracellular portion of the chain corresponds to 40 to 70 (TGYDTNKNYTGSENPDEFKGGEVQERVNNFY). The N-linked (GlcNAc...) asparagine glycan is linked to Asn47. Residues 71–91 (GYFRDINIMIFFGFGFLMTFL) form a helical membrane-spanning segment. At 92-99 (RRYGYSAL) the chain is on the cytoplasmic side. A helical membrane pass occupies residues 100-120 (GYTFIISALVSQWSVLLNGFF). The Extracellular portion of the chain corresponds to 121–141 (EAWSHSNKHGEFPSTWEFSMD). A helical membrane pass occupies residues 142 to 162 (SLLQGFFCSGSVMISYGAILG). Residues 163–166 (RVTP) are Cytoplasmic-facing. A helical membrane pass occupies residues 167–187 (LHMLIMGIIEPIFFFLNVFIG). Over 188–195 (EMNLEAID) the chain is Extracellular. The helical transmembrane segment at 196-216 (VGGGMYIHLFGSVFGLTVAWF) threads the bilayer. Residues 217-236 (LTDRKSKECTDNAPSYSGDN) are Cytoplasmic-facing. The helical transmembrane segment at 237-257 (FAMAGTLFLWMMWPSFNAAIA) threads the bilayer. The Extracellular segment spans residues 258–263 (PLGEPQ). A helical transmembrane segment spans residues 264-284 (FRAIANTFLSLTGSTVATFIV). Over 285-299 (SRLFSHLGNKLDMVH) the chain is Cytoplasmic. A helical membrane pass occupies residues 300-319 (VQNSSLAGGVVQGCIAHMNI). At 320-321 (NP) the chain is on the extracellular side. The chain crosses the membrane as a helical span at residues 322–342 (GGAIAMGFIAGTISVCGYLFI). Residues 343–357 (TPKVQRKLHIQDTCG) are Cytoplasmic-facing. Residues 358–378 (ILNLHCIPGFLGSIAAIFAAI) form a helical membrane-spanning segment. At 379-406 (KGLNNPNMYSKVEFEQIFRAGDSQASAN) the chain is on the extracellular side. A helical membrane pass occupies residues 407 to 427 (LIATMVSIGLGIVGGLLVGVI). At 428 to 527 (LLQLKKIKGL…EEDEFKQEPI (100 aa)) the chain is on the cytoplasmic side. Residues 471–527 (SEDTAGGDDEEEGVGKEHGAVEMGKHNRIVQPKQDNKYHKQLPSDDEEEDEFKQEPI) form a disordered region. Residues 483 to 495 (GVGKEHGAVEMGK) are compositionally biased toward basic and acidic residues. Residues 514–527 (SDDEEEDEFKQEPI) are compositionally biased toward acidic residues.

The protein belongs to the ammonium transporter (TC 2.A.49) family. Rh subfamily. Interacts with ap1g1.

It localises to the contractile vacuole. The protein localises to the membrane. In terms of biological role, may be a carbon dioxide/bicarbonate transporter. This Dictyostelium discoideum (Social amoeba) protein is Rhesus-like glycoprotein A (rhgA).